The sequence spans 359 residues: Dual-specificity RNA methyltransferase RlmN (359 aa).

E98 (proton acceptor) is an active-site residue. The 226-residue stretch at 104 to 329 folds into the Radical SAM core domain; the sequence is EPKRGTLCIS…LEHGLTATIR (226 aa). C111 and C340 are joined by a disulfide. Positions 118, 122, and 125 each coordinate [4Fe-4S] cluster. S-adenosyl-L-methionine is bound by residues 166 to 167, S198, 220 to 222, and N297; these read GE and SLH. The active-site S-methylcysteine intermediate is the C340.

Belongs to the radical SAM superfamily. RlmN family. The cofactor is [4Fe-4S] cluster.

Its subcellular location is the cytoplasm. The enzyme catalyses adenosine(2503) in 23S rRNA + 2 reduced [2Fe-2S]-[ferredoxin] + 2 S-adenosyl-L-methionine = 2-methyladenosine(2503) in 23S rRNA + 5'-deoxyadenosine + L-methionine + 2 oxidized [2Fe-2S]-[ferredoxin] + S-adenosyl-L-homocysteine. It catalyses the reaction adenosine(37) in tRNA + 2 reduced [2Fe-2S]-[ferredoxin] + 2 S-adenosyl-L-methionine = 2-methyladenosine(37) in tRNA + 5'-deoxyadenosine + L-methionine + 2 oxidized [2Fe-2S]-[ferredoxin] + S-adenosyl-L-homocysteine. In terms of biological role, specifically methylates position 2 of adenine 2503 in 23S rRNA and position 2 of adenine 37 in tRNAs. m2A2503 modification seems to play a crucial role in the proofreading step occurring at the peptidyl transferase center and thus would serve to optimize ribosomal fidelity. This Halorhodospira halophila (strain DSM 244 / SL1) (Ectothiorhodospira halophila (strain DSM 244 / SL1)) protein is Dual-specificity RNA methyltransferase RlmN.